Consider the following 872-residue polypeptide: Leucine--tRNA ligase (872 aa).

A 'HIGH' region motif is present at residues 56-66; that stretch reads PYPSGNLHMGH. Residues 629-633 carry the 'KMSKS' region motif; the sequence is KMSKS. Lys632 is a binding site for ATP.

Belongs to the class-I aminoacyl-tRNA synthetase family.

It localises to the cytoplasm. It carries out the reaction tRNA(Leu) + L-leucine + ATP = L-leucyl-tRNA(Leu) + AMP + diphosphate. The chain is Leucine--tRNA ligase from Prochlorococcus marinus (strain MIT 9211).